The chain runs to 172 residues: Signal peptidase complex catalytic subunit sec11 (172 aa).

Residues 1–14 (MLSFLQNPRQAAAQ) lie on the Cytoplasmic side of the membrane. Residues 15–35 (VLNFALILSTAFMMWKGLSVA) traverse the membrane as a helical; Signal-anchor for type II membrane protein segment. Over 36–172 (SDSPSPIVVV…MGLVVVLQRE (137 aa)) the chain is Lumenal. Catalysis depends on charge relay system residues Ser49, His90, and Asp115. The tract at residues 158–169 (VMLGMMGLVVVL) is C-terminal short (CTS) helix.

The protein belongs to the peptidase S26B family. Component of the signal peptidase complex (SPC) composed of a catalytic subunit SEC11 and three accessory subunits SPC1, SPC2 and SPC3. The complex induces a local thinning of the ER membrane which is used to measure the length of the signal peptide (SP) h-region of protein substrates. This ensures the selectivity of the complex towards h-regions shorter than 18-20 amino acids. SPC associates with the translocon complex.

Its subcellular location is the endoplasmic reticulum membrane. The enzyme catalyses Cleavage of hydrophobic, N-terminal signal or leader sequences from secreted and periplasmic proteins.. Functionally, catalytic component of the signal peptidase complex (SPC) which catalyzes the cleavage of N-terminal signal sequences from nascent proteins as they are translocated into the lumen of the endoplasmic reticulum. Specifically cleaves N-terminal signal peptides that contain a hydrophobic alpha-helix (h-region) shorter than 18-20 amino acids. The polypeptide is Signal peptidase complex catalytic subunit sec11 (sec11) (Sclerotinia sclerotiorum (strain ATCC 18683 / 1980 / Ss-1) (White mold)).